A 418-amino-acid polypeptide reads, in one-letter code: Probable carboxypeptidase AO090166000075 (418 aa).

Residues 1–18 form the signal peptide; the sequence is MKATDLFHVTALVAGALA. N-linked (GlcNAc...) asparagine glycosylation occurs at asparagine 74. A Zn(2+)-binding site is contributed by aspartate 147. A glycan (N-linked (GlcNAc...) asparagine) is linked at asparagine 168. Glutamate 179 functions as the Proton acceptor in the catalytic mechanism. Glutamate 180 provides a ligand contact to Zn(2+).

It belongs to the peptidase M20A family. Zn(2+) is required as a cofactor.

It is found in the secreted. This is Probable carboxypeptidase AO090166000075 from Aspergillus oryzae (strain ATCC 42149 / RIB 40) (Yellow koji mold).